The primary structure comprises 392 residues: Serine protease ea (392 aa).

A signal peptide spans 1–19 (MLKPSIICLFLGILAKSSA). Positions 20-127 (GQFYFPNEAA…GQCGNILSNR (108 aa)) are cleaved as a propeptide — activation peptide. A Clip domain is found at 36-89 (RCITPNRERALCIHLEDCKYLYGLLTTTPLRDTDRLYLSRSQCGYTNGKVLICC). Intrachain disulfides connect C37–C88, C47–C78, and C53–C89. A glycan (N-linked (GlcNAc...) asparagine) is linked at N107. 5 disulfide bridges follow: C120/C260, C158/C174, C202/C212, C307/C324, and C334/C367. Residues 128 to 391 (IYGGMKTKID…YVDWIQNTIE (264 aa)) form the Peptidase S1 domain. H173 acts as the Charge relay system in catalysis. The Ca(2+) site is built by E193, D195, T198, and D201. The active-site Charge relay system is D240. Residue S338 is the Charge relay system of the active site.

It belongs to the peptidase S1 family. CLIP subfamily. As to quaternary structure, interacts with Spn27A; the two proteins are covalently linked leading to inhibition of ea catalytic activity. Interacts (via Peptidase domain) with snk (via N-terminal prodomain); leads to proteolytic activation of ea by snk. Sulfation of a vitelline membrane component by pip is required for proteolytic cleavage of ea by snk but not for the interaction of ea with snk. Post-translationally, proteolytically cleaved by snk. Activation peptide and active catalytic domain remain associated by a disulfide bond. Processed ea/easter is present in extremely low amounts in the early embryo as it is rapidly converted into a high molecular mass complex made up of ea covalently bound to the serpin Spn27A. Zymogen activation is also controlled by a negative feedback loop from Dorsal.

The protein resides in the secreted. Its activity is regulated as follows. Activated proteolytically by snk; activation requires both activation of the ndl-gd-snk protease cascade and sulfation of a vitelline membrane component by pip. Inhibited by binding of the serpin Spn27A. Its function is as follows. Component of the extracellular signaling pathway that establishes the dorsal-ventral pathway of the embryo. A protease cascade involving ndl, gd, snk and ea results in activation of the spz Toll receptor ligand; acts downstream of ndl, gd and snk and is required for proteolytic processing of spz. Activation of ea requires both activation of the ndl-gd-snk protease cascade and sulfation of a vitelline membrane component by pip. Localized activation of the Toll receptor in the ventral region of the embryo defines cell identities along the dorsal-ventral continuum. This Drosophila melanogaster (Fruit fly) protein is Serine protease ea.